The following is a 204-amino-acid chain: IMPACT family member YigZ (204 aa).

The protein belongs to the IMPACT family. As to quaternary structure, monomer.

This Escherichia coli (strain K12) protein is IMPACT family member YigZ (yigZ).